The chain runs to 737 residues: Catalase-peroxidase (737 aa).

Positions 1-23 are cleaved as a signal peptide; the sequence is MLKKILPVLITLAIVHNTPTAWA. A cross-link (tryptophyl-tyrosyl-methioninium (Trp-Tyr) (with M-249)) is located at residues 102 to 223; the sequence is WHGAGTYRIY…LAATQMGLIY (122 aa). Catalysis depends on H103, which acts as the Proton acceptor. Positions 223–249 form a cross-link, tryptophyl-tyrosyl-methioninium (Tyr-Met) (with W-102); sequence YVNPEGPNGKPDPVAAAKDIREAFARM. Residue H264 participates in heme b binding.

This sequence belongs to the peroxidase family. Peroxidase/catalase subfamily. In terms of assembly, homodimer or homotetramer. Heme b serves as cofactor. Formation of the three residue Trp-Tyr-Met cross-link is important for the catalase, but not the peroxidase activity of the enzyme.

It catalyses the reaction H2O2 + AH2 = A + 2 H2O. It carries out the reaction 2 H2O2 = O2 + 2 H2O. In terms of biological role, bifunctional enzyme with both catalase and broad-spectrum peroxidase activity. The sequence is that of Catalase-peroxidase from Yersinia pseudotuberculosis serotype I (strain IP32953).